The chain runs to 353 residues: Photosystem II D2 protein (353 aa).

N-acetylthreonine is present on Thr2. At Thr2 the chain carries Phosphothreonine. The helical transmembrane segment at Cys41 to Thr61 threads the bilayer. A chlorophyll a-binding site is contributed by His118. Residues Gly125–Pro141 traverse the membrane as a helical segment. Positions 130 and 143 each coordinate pheophytin a. Residues Val153–Ser166 form a helical membrane-spanning segment. Position 198 (His198) interacts with chlorophyll a. The helical transmembrane segment at Ala208 to Asp228 threads the bilayer. Residues His215 and Phe262 each coordinate a plastoquinone. His215 lines the Fe cation pocket. His269 contacts Fe cation. The helical transmembrane segment at Gly279–Arg295 threads the bilayer.

It belongs to the reaction center PufL/M/PsbA/D family. In terms of assembly, PSII is composed of 1 copy each of membrane proteins PsbA, PsbB, PsbC, PsbD, PsbE, PsbF, PsbH, PsbI, PsbJ, PsbK, PsbL, PsbM, PsbT, PsbX, PsbY, PsbZ, Psb30/Ycf12, at least 3 peripheral proteins of the oxygen-evolving complex and a large number of cofactors. It forms dimeric complexes. Interacts with PAM68. The D1/D2 heterodimer binds P680, chlorophylls that are the primary electron donor of PSII, and subsequent electron acceptors. It shares a non-heme iron and each subunit binds pheophytin, quinone, additional chlorophylls, carotenoids and lipids. There is also a Cl(-1) ion associated with D1 and D2, which is required for oxygen evolution. The PSII complex binds additional chlorophylls, carotenoids and specific lipids. is required as a cofactor. Post-translationally, phosphorylation occurs in normal plant growth light conditions. Rapid dephosphorylation occurs during heat shock.

The protein resides in the plastid. Its subcellular location is the chloroplast thylakoid membrane. The enzyme catalyses 2 a plastoquinone + 4 hnu + 2 H2O = 2 a plastoquinol + O2. In terms of biological role, photosystem II (PSII) is a light-driven water:plastoquinone oxidoreductase that uses light energy to abstract electrons from H(2)O, generating O(2) and a proton gradient subsequently used for ATP formation. It consists of a core antenna complex that captures photons, and an electron transfer chain that converts photonic excitation into a charge separation. The D1/D2 (PsbA/PsbD) reaction center heterodimer binds P680, the primary electron donor of PSII as well as several subsequent electron acceptors. D2 is needed for assembly of a stable PSII complex. This is Photosystem II D2 protein from Arabidopsis thaliana (Mouse-ear cress).